The sequence spans 553 residues: Vacuolar fusion protein MON1 homolog B (553 aa).

Methionine 1 bears the N-acetylmethionine mark. Disordered stretches follow at residues 1 to 111 and 534 to 553; these read MEAG…DEDW and STPPSTSADQAPNNGLFTGL. The segment covering 23–35 has biased composition (basic and acidic residues); sequence FPREEAGDSERVH. Positions 52–72 are enriched in polar residues; it reads KDQPSSLLSPLPQTEAASSTC. At serine 57 the chain carries Phosphoserine. Residues 78-95 show a composition bias toward low complexity; sequence AAASDSSPPGEPESNSEG. Acidic residues predominate over residues 96–108; the sequence is QGEDPDDGGDPSD. Positions 541-553 are enriched in polar residues; sequence ADQAPNNGLFTGL.

The protein belongs to the MON1/SAND family. In terms of assembly, interacts with CCNT2; down-regulates CCNT2-mediated activation of viral promoters during herpes simplex virus 1/HHV-1 infection. Found in a complex with RMC1, CCZ1 MON1A and MON1B.

The chain is Vacuolar fusion protein MON1 homolog B (Mon1b) from Mus musculus (Mouse).